The chain runs to 60 residues: Hemocyte defensin Cg-Defh2 (60 aa).

An N-terminal signal peptide occupies residues L1 to A17. 3 residues coordinate beta-D-GlcNAc-(1-&gt;4)-Mur2Ac(oyl-L-Ala-gamma-D-Glu-L-Lys-D-Ala-D-Ala)-di-trans,octa-cis-undecaprenyl diphosphate: F19, G20, and C21. 4 disulfide bridges follow: C21/C42, C28/C51, C32/C53, and C37/C56. The binds to membrane interface stretch occupies residues P22–Q25. H31 provides a ligand contact to beta-D-GlcNAc-(1-&gt;4)-Mur2Ac(oyl-L-Ala-gamma-D-Glu-L-Lys-D-Ala-D-Ala)-di-trans,octa-cis-undecaprenyl diphosphate. The binds to membrane interface stretch occupies residues D43 to L49. A beta-D-GlcNAc-(1-&gt;4)-Mur2Ac(oyl-L-Ala-gamma-D-Glu-L-Lys-D-Ala-D-Ala)-di-trans,octa-cis-undecaprenyl diphosphate-binding site is contributed by C51.

This sequence belongs to the invertebrate defensin family. As to expression, expressed in hemocytes.

The protein resides in the secreted. Its subcellular location is the target cell membrane. Its function is as follows. Antibacterial peptide mostly active against Gram-positive bacteria. It acts by selectively inhibiting peptidoglycan biosynthesis through complex formation with the cell wall precursor lipid II (1:1 molar ratio) thus inhibiting cell wall synthesis. It does not disrupt cell membranes. Is noticeably more potent than Cg-Defh1. In Magallana gigas (Pacific oyster), this protein is Hemocyte defensin Cg-Defh2.